Here is a 177-residue protein sequence, read N- to C-terminus: GTP-dependent dephospho-CoA kinase (177 aa).

GTP-binding residues include aspartate 48, valine 49, valine 50, aspartate 67, lysine 69, glutamate 124, and aspartate 147.

This sequence belongs to the GTP-dependent DPCK family.

It carries out the reaction 3'-dephospho-CoA + GTP = GDP + CoA + H(+). The protein operates within cofactor biosynthesis; coenzyme A biosynthesis. Catalyzes the GTP-dependent phosphorylation of the 3'-hydroxyl group of dephosphocoenzyme A to form coenzyme A (CoA). The protein is GTP-dependent dephospho-CoA kinase of Thermococcus onnurineus (strain NA1).